Here is a 110-residue protein sequence, read N- to C-terminus: uncharacterized protein (110 aa).

This is an uncharacterized protein from Enterobacteria phage T4 (Bacteriophage T4).